Here is a 734-residue protein sequence, read N- to C-terminus: MALRFPRFSQGLAQDPTTRRIWFGIATAHDFESHDDITEERLYQNIFASHFGQLAIIFLWTSGNLFHVAWQGNFESWVQDPLHVRPIAHAIWDPHFGQPAVEAFTRGGAPGPVNIAYSGVYQWWYTIGLRTNEDLYTGALFLLFLSAISLIGGWLHLQPKWKPSVSWFKNAESRLNHHLSGLFGVSSLAWTGHLVHVAIPASRGEYVRWNNFLDVLPHPQGLGPLFSGQWNLYAQNPDSSSHLFGTSQGAGTAILTLLGGFHPQTQSLWLTDMAHHHLAIAFIFLIAGHMYRTNFGIGHSIKDLLEAHTPPGGRLGRGHKGLYDTINNSLHFQLGLALACLGVITSLVAQHMYSLPAYAFIAQDFTTQAASYTHHQYIAGFIMTGAFAHGAIFFIRDYNPEQNEDNVLARMLDHKEAIISHLSWASLFLGFHTLGLYVHNDVMLAFGTPEKQILIEPIFAQWIQSAHGKTLYGFDVLLSSTSGPAFNAGRSIWLPGWLSAVNENSNSLFLTIGPGDFLVHHAIALGLHTTTLILVKGALDARGSKLMPDKKDFGYSFPCDGPGRGGTCDISAWDAFYLAVFWMLNTIGWVTFYWHWKHITLWQGNVSQFNESSTYLMGWLRDYLWLNSSQLINGYNPFGMNSLSVWAWMFLFGHLVWATGFMFLISWRGYWQGLIETLAWAHERTPLANLIRWRDKPVALSIVQARLVGLAHFSVGYIFTYAAFLIASTSGKFG.

A run of 8 helical transmembrane segments spans residues 46–69, 135–158, 175–199, 273–291, 330–353, 369–395, 417–439, and 517–535; these read IFASHFGQLAIIFLWTSGNLFHVA, LYTGALFLLFLSAISLIGGWLHLQ, LNHHLSGLFGVSSLAWTGHLVHVAI, MAHHHLAIAFIFLIAGHMY, LHFQLGLALACLGVITSLVAQHMY, AASYTHHQYIAGFIMTGAFAHGAIFFI, AIISHLSWASLFLGFHTLGLYVH, and FLVHHAIALGLHTTTLILV. Cys-559 and Cys-568 together coordinate [4Fe-4S] cluster. 2 helical membrane passes run 575–596 and 643–665; these read AFYLAVFWMLNTIGWVTFYWHW and LSVWAWMFLFGHLVWATGFMFLI. Chlorophyll a contacts are provided by His-654, Met-662, and Tyr-670. Trp-671 contributes to the phylloquinone binding site. Residues 707-727 form a helical membrane-spanning segment; it reads LVGLAHFSVGYIFTYAAFLIA.

The protein belongs to the PsaA/PsaB family. In terms of assembly, the PsaA/B heterodimer binds the P700 chlorophyll special pair and subsequent electron acceptors. PSI consists of a core antenna complex that captures photons, and an electron transfer chain that converts photonic excitation into a charge separation. The eukaryotic PSI reaction center is composed of at least 11 subunits. The cofactor is P700 is a chlorophyll a/chlorophyll a' dimer, A0 is one or more chlorophyll a, A1 is one or both phylloquinones and FX is a shared 4Fe-4S iron-sulfur center..

The protein resides in the plastid. It is found in the chloroplast thylakoid membrane. It carries out the reaction reduced [plastocyanin] + hnu + oxidized [2Fe-2S]-[ferredoxin] = oxidized [plastocyanin] + reduced [2Fe-2S]-[ferredoxin]. Its function is as follows. PsaA and PsaB bind P700, the primary electron donor of photosystem I (PSI), as well as the electron acceptors A0, A1 and FX. PSI is a plastocyanin-ferredoxin oxidoreductase, converting photonic excitation into a charge separation, which transfers an electron from the donor P700 chlorophyll pair to the spectroscopically characterized acceptors A0, A1, FX, FA and FB in turn. Oxidized P700 is reduced on the lumenal side of the thylakoid membrane by plastocyanin. This Acorus calamus (Sweet flag) protein is Photosystem I P700 chlorophyll a apoprotein A2.